The sequence spans 606 residues: Sporulation kinase A (606 aa).

In terms of domain architecture, PAS 1 spans 3-73; sequence QDTQHVKPLQ…SYFYNEHHLM (71 aa). In terms of domain architecture, PAC 1 spans 77–116; sequence FRFIKKDHTIVWVEAAVEIVTTRAERTEREIILKMKVLEE. The 75-residue stretch at 140–214 folds into the PAS 2 domain; it reads YITDDYERLV…IRMQKGMEVG (75 aa). Residues 218–255 form the PAC 2 domain; it reads QTWKRLDGTPVHLEVKASPTVYKNQQAELLLLIDISSR. Residues 265–335 enclose the PAS 3 domain; sequence SRERYQLLIQ…ERIQNIAEQK (71 aa). The 205-residue stretch at 402-606 folds into the Histidine kinase domain; the sequence is GIAHEIRNPL…TAFKISFPKK (205 aa). H405 is modified (phosphohistidine; by autocatalysis).

It carries out the reaction ATP + protein L-histidine = ADP + protein N-phospho-L-histidine.. Phosphorylates the sporulation-regulatory proteins spo0A and spo0F. It also autophosphorylates in the presence of ATP. The protein is Sporulation kinase A (kinA) of Bacillus subtilis (strain 168).